Here is a 241-residue protein sequence, read N- to C-terminus: MGKRLIIQRRGRGTPTYRSSSHRFRGKVAYRSYDKLEREGSLTGIVIDIIHDPGRSAPVAVVKFDNGEEKLVLAPESIAIDDEIECGVSASIEPGNTLPLSEIPEGTPVFNIENNPGDGGKFVRSSGTYASLITHDVDKTMIEMPSGELKAFNPRSRATVGVVAGGGRKEKPFLKAGNRYHALKAKGKKMMTVRGVAMNAVDHPHGGGNRQHPGRPTTISRHAPAGRKVGSIAAKRTGKRR.

The segment at 200 to 241 (AVDHPHGGGNRQHPGRPTTISRHAPAGRKVGSIAAKRTGKRR) is disordered.

This sequence belongs to the universal ribosomal protein uL2 family. Part of the 50S ribosomal subunit. Forms a bridge to the 30S subunit in the 70S ribosome.

In terms of biological role, one of the primary rRNA binding proteins. Required for association of the 30S and 50S subunits to form the 70S ribosome, for tRNA binding and peptide bond formation. It has been suggested to have peptidyltransferase activity; this is somewhat controversial. Makes several contacts with the 16S rRNA in the 70S ribosome. The chain is Large ribosomal subunit protein uL2 from Methanosphaera stadtmanae (strain ATCC 43021 / DSM 3091 / JCM 11832 / MCB-3).